Here is a 754-residue protein sequence, read N- to C-terminus: Glutathione biosynthesis bifunctional protein GshAB (754 aa).

The glutamate--cysteine ligase stretch occupies residues 1–332 (MTLNQLLQKL…QGHALNEKIA (332 aa)). Residues 488–746 (KKILADASFP…ITTKILDKLF (259 aa)) form the ATP-grasp domain. 515–573 (PLIKDKQIVVKPKSTNFGLGISIFQEPASLDNYQKALEIAFAEDTSVLVEEFIPGTEYR) is a binding site for ATP. Positions 695, 716, and 718 each coordinate Mg(2+). Residues D695, E716, and N718 each coordinate Mn(2+).

The protein in the N-terminal section; belongs to the glutamate--cysteine ligase type 1 family. Type 2 subfamily. In terms of assembly, monomer. The cofactor is Mg(2+). Requires Mn(2+) as cofactor.

The enzyme catalyses L-cysteine + L-glutamate + ATP = gamma-L-glutamyl-L-cysteine + ADP + phosphate + H(+). The catalysed reaction is gamma-L-glutamyl-L-cysteine + glycine + ATP = glutathione + ADP + phosphate + H(+). It functions in the pathway sulfur metabolism; glutathione biosynthesis; glutathione from L-cysteine and L-glutamate: step 1/2. The protein operates within sulfur metabolism; glutathione biosynthesis; glutathione from L-cysteine and L-glutamate: step 2/2. Its function is as follows. Synthesizes glutathione from L-glutamate and L-cysteine via gamma-L-glutamyl-L-cysteine. This is Glutathione biosynthesis bifunctional protein GshAB from Streptococcus thermophilus (strain ATCC BAA-250 / LMG 18311).